Reading from the N-terminus, the 275-residue chain is Large ribosomal subunit protein uL2 (275 aa).

Residues 223 to 275 (VAMNPIDHPHGGGEGRTGEAREPVSPWGTPSKGYKTRRNKRTNNMIVQRRKRK) are disordered. Positions 229–244 (DHPHGGGEGRTGEARE) are enriched in basic and acidic residues.

This sequence belongs to the universal ribosomal protein uL2 family. Part of the 50S ribosomal subunit. Forms a bridge to the 30S subunit in the 70S ribosome.

In terms of biological role, one of the primary rRNA binding proteins. Required for association of the 30S and 50S subunits to form the 70S ribosome, for tRNA binding and peptide bond formation. It has been suggested to have peptidyltransferase activity; this is somewhat controversial. Makes several contacts with the 16S rRNA in the 70S ribosome. This chain is Large ribosomal subunit protein uL2, found in Bordetella avium (strain 197N).